The sequence spans 101 residues: Small ribosomal subunit protein bS18c (101 aa).

The span at 1-19 shows a compositional bias: basic residues; sequence MDKSKQPFRKSKRSFRRRL. Residues 1 to 24 form a disordered region; that stretch reads MDKSKQPFRKSKRSFRRRLPPIGS.

Belongs to the bacterial ribosomal protein bS18 family. Part of the 30S ribosomal subunit.

Its subcellular location is the plastid. It is found in the chloroplast. In Amborella trichopoda, this protein is Small ribosomal subunit protein bS18c.